The primary structure comprises 257 residues: Glutamate racemase (257 aa).

Substrate contacts are provided by residues 12–13 and 44–45; these read DS and YG. The Proton donor/acceptor role is filled by cysteine 75. Residue 76–77 coordinates substrate; that stretch reads NT. Cysteine 185 acts as the Proton donor/acceptor in catalysis. 186 to 187 provides a ligand contact to substrate; that stretch reads TH.

It belongs to the aspartate/glutamate racemases family.

The enzyme catalyses L-glutamate = D-glutamate. It participates in cell wall biogenesis; peptidoglycan biosynthesis. Provides the (R)-glutamate required for cell wall biosynthesis. This Clostridium botulinum (strain Kyoto / Type A2) protein is Glutamate racemase.